Reading from the N-terminus, the 265-residue chain is Gap junction beta-4 protein (265 aa).

An intramembrane segment occupies 2-13; it reads NWGFLQGILSGV. Topologically, residues 14–20 are cytoplasmic; sequence NKYSTAL. Residues 21–40 form a helical membrane-spanning segment; the sequence is GRIWLSVVFIFRVLVYVVAA. The Extracellular portion of the chain corresponds to 41–73; it reads EEVWDDEQKDFICNTKQPGCPNVCYDEFFPVSH. Disulfide bonds link Cys-53-Cys-175, Cys-60-Cys-169, and Cys-64-Cys-164. A helical transmembrane segment spans residues 74-94; it reads VRLWALQLILVTCPSLLVVMH. Residues 95 to 130 are Cytoplasmic-facing; sequence VAYREERERKHRLKHGPDAPALYSNLSKKRGGLWWT. Residues 131 to 151 form a helical membrane-spanning segment; it reads YLLSLIFKAAVDSGFLYIFHC. Residues 152–184 are Extracellular-facing; sequence IYKDYDMPRVVACSVQPCPHTVDCYISRPTEKK. Residues 185–205 form a helical membrane-spanning segment; it reads VFTYFMVVTAAICILLNLSEV. Residues 206-265 are Cytoplasmic-facing; sequence AYLVGKRCMEVFRPRRQKTSRRHQLPDTCPPYVISKGHPQDESTVLTKAGMATVDAGVYP.

It belongs to the connexin family. Beta-type (group I) subfamily. A hemichannel or connexon is composed of a hexamer of connexins. A functional gap junction is formed by the apposition of two hemichannels. Forms heteromeric channels with GJB2. Detected in adult heart, kidney, skin and cochlea, where it is detected in spiral ganglion, stria vascularis, spiral limbus and spiral ligament (at protein level).

Its subcellular location is the cell membrane. It is found in the cell junction. It localises to the gap junction. Functionally, structural component of gap junctions. Gap junctions are dodecameric channels that connect the cytoplasm of adjoining cells. They are formed by the docking of two hexameric hemichannels, one from each cell membrane. Small molecules and ions diffuse from one cell to a neighboring cell via the central pore. This chain is Gap junction beta-4 protein (Gjb4), found in Rattus norvegicus (Rat).